The following is a 177-amino-acid chain: MAVANSSPVNPVVFFDVSIGGQEVGRMKIELFADVVPKTAENFRQFCTGEFRKDGVPIGYKGSTFHRVIKDFMIQGGDFVNGDGTGVASIYRGPFADENFKLRHSAPGLLSMANSGPSTNGCQFFITCSKCDWLDGKHVVFGKIIDGLLVMRKIENVPTGPNNKPKLPVVISQCGEM.

Position 2 is an N-acetylalanine (Ala-2). Residues Phe-14–Glu-176 form the PPIase cyclophilin-type domain.

Belongs to the cyclophilin-type PPIase family. PPIase H subfamily. As to quaternary structure, interacts directly with PRPF4. Part of a heteromeric complex containing PPIH, PRPF3 and PRPF4 that is stable in the absence of RNA. Component of the U4/U6-U5 tri-snRNP complex composed of the U4, U6 and U5 snRNAs and at least PRPF3, PRPF4, PRPF6, PRPF8, PRPF31, SNRNP200, TXNL4A, SNRNP40, DDX23, CD2BP2, PPIH, SNU13, EFTUD2, SART1 and USP39. Heterodimer with PRPF18.

It is found in the nucleus speckle. It localises to the cytoplasm. It catalyses the reaction [protein]-peptidylproline (omega=180) = [protein]-peptidylproline (omega=0). Inhibited by cyclosporin A. PPIase that catalyzes the cis-trans isomerization of proline imidic peptide bonds in oligopeptides and may therefore assist protein folding. Participates in pre-mRNA splicing. May play a role in the assembly of the U4/U5/U6 tri-snRNP complex, one of the building blocks of the spliceosome. May act as a chaperone. This chain is Peptidyl-prolyl cis-trans isomerase H (PPIH), found in Homo sapiens (Human).